The sequence spans 380 residues: Succinyl-diaminopimelate desuccinylase (380 aa).

Histidine 68 contributes to the Zn(2+) binding site. The active site involves aspartate 70. Aspartate 101 contributes to the Zn(2+) binding site. Residue glutamate 135 is the Proton acceptor of the active site. Zn(2+)-binding residues include glutamate 136, glutamate 164, and histidine 350.

It belongs to the peptidase M20A family. DapE subfamily. As to quaternary structure, homodimer. Zn(2+) serves as cofactor. Requires Co(2+) as cofactor.

It carries out the reaction N-succinyl-(2S,6S)-2,6-diaminopimelate + H2O = (2S,6S)-2,6-diaminopimelate + succinate. It participates in amino-acid biosynthesis; L-lysine biosynthesis via DAP pathway; LL-2,6-diaminopimelate from (S)-tetrahydrodipicolinate (succinylase route): step 3/3. Functionally, catalyzes the hydrolysis of N-succinyl-L,L-diaminopimelic acid (SDAP), forming succinate and LL-2,6-diaminopimelate (DAP), an intermediate involved in the bacterial biosynthesis of lysine and meso-diaminopimelic acid, an essential component of bacterial cell walls. The sequence is that of Succinyl-diaminopimelate desuccinylase from Tolumonas auensis (strain DSM 9187 / NBRC 110442 / TA 4).